Here is a 199-residue protein sequence, read N- to C-terminus: Probable cobalt-precorrin-6B C(15)-methyltransferase (decarboxylating) (199 aa).

S-adenosyl-L-methionine-binding positions include Thr-24, Gly-48 to Gly-52, Asp-72, and Ala-101.

Belongs to the methyltransferase superfamily. Archaeal-type CbiT family.

The enzyme catalyses Co-precorrin-6B + S-adenosyl-L-methionine = Co-precorrin-7 + S-adenosyl-L-homocysteine + CO2. It participates in cofactor biosynthesis; adenosylcobalamin biosynthesis; cob(II)yrinate a,c-diamide from sirohydrochlorin (anaerobic route): step 8/10. Catalyzes the methylation of C-15 in cobalt-precorrin-6B followed by the decarboxylation of C-12 to form cobalt-precorrin-7. This is Probable cobalt-precorrin-6B C(15)-methyltransferase (decarboxylating) from Saccharolobus islandicus (strain Y.N.15.51 / Yellowstone #2) (Sulfolobus islandicus).